The following is a 282-amino-acid chain: Nucleotide-binding protein Shew_3314 (282 aa).

ATP is bound at residue 8–15; sequence GRSGSGKS. Residue 56–59 coordinates GTP; it reads DVRN.

This sequence belongs to the RapZ-like family.

Displays ATPase and GTPase activities. The protein is Nucleotide-binding protein Shew_3314 of Shewanella loihica (strain ATCC BAA-1088 / PV-4).